A 432-amino-acid chain; its full sequence is ATP-dependent RNA helicase RhlB (432 aa).

Positions 9–37 (QNFADLGLQPQVIDGLNAKGFIKCTPIQA) match the Q motif motif. Positions 40–219 (LPVLLAGQDI…FEHMQEPEHV (180 aa)) constitute a Helicase ATP-binding domain. 53–60 (AQTGTGKT) is an ATP binding site. The short motif at 165–168 (DEAD) is the DEAD box element. The Helicase C-terminal domain occupies 245–390 (ALLQTLIEEE…QSDYDASALL (146 aa)). The interval 396–432 (PLRLQRRPQQNRRNNNGQRQGGNRKHTRPRQPRNTQS) is disordered. Residues 417–426 (GNRKHTRPRQ) are compositionally biased toward basic residues.

It belongs to the DEAD box helicase family. RhlB subfamily. As to quaternary structure, component of the RNA degradosome, which is a multiprotein complex involved in RNA processing and mRNA degradation.

The protein localises to the cytoplasm. It catalyses the reaction ATP + H2O = ADP + phosphate + H(+). Its function is as follows. DEAD-box RNA helicase involved in RNA degradation. Has RNA-dependent ATPase activity and unwinds double-stranded RNA. This chain is ATP-dependent RNA helicase RhlB, found in Aliivibrio fischeri (strain ATCC 700601 / ES114) (Vibrio fischeri).